A 239-amino-acid chain; its full sequence is ATP-dependent dethiobiotin synthetase BioD (239 aa).

15 to 20 (EIGKTF) serves as a coordination point for ATP. Position 19 (Thr-19) interacts with Mg(2+). The active site involves Lys-40. ATP is bound by residues Asp-57, 118–121 (EGVG), and 178–179 (NH). 2 residues coordinate Mg(2+): Asp-57 and Glu-118.

It belongs to the dethiobiotin synthetase family. Homodimer. Mg(2+) serves as cofactor.

The protein resides in the cytoplasm. It carries out the reaction (7R,8S)-7,8-diammoniononanoate + CO2 + ATP = (4R,5S)-dethiobiotin + ADP + phosphate + 3 H(+). It functions in the pathway cofactor biosynthesis; biotin biosynthesis; biotin from 7,8-diaminononanoate: step 1/2. Functionally, catalyzes a mechanistically unusual reaction, the ATP-dependent insertion of CO2 between the N7 and N8 nitrogen atoms of 7,8-diaminopelargonic acid (DAPA, also called 7,8-diammoniononanoate) to form a ureido ring. The protein is ATP-dependent dethiobiotin synthetase BioD of Burkholderia cenocepacia (strain ATCC BAA-245 / DSM 16553 / LMG 16656 / NCTC 13227 / J2315 / CF5610) (Burkholderia cepacia (strain J2315)).